A 154-amino-acid polypeptide reads, in one-letter code: Endoribonuclease YbeY (154 aa).

The Zn(2+) site is built by His-120, His-124, and His-130.

The protein belongs to the endoribonuclease YbeY family. It depends on Zn(2+) as a cofactor.

It localises to the cytoplasm. In terms of biological role, single strand-specific metallo-endoribonuclease involved in late-stage 70S ribosome quality control and in maturation of the 3' terminus of the 16S rRNA. The polypeptide is Endoribonuclease YbeY (Oceanobacillus iheyensis (strain DSM 14371 / CIP 107618 / JCM 11309 / KCTC 3954 / HTE831)).